A 461-amino-acid polypeptide reads, in one-letter code: UDP-N-acetylmuramate--L-alanine ligase (461 aa).

112-118 (GTHGKTT) serves as a coordination point for ATP.

Belongs to the MurCDEF family.

It is found in the cytoplasm. The catalysed reaction is UDP-N-acetyl-alpha-D-muramate + L-alanine + ATP = UDP-N-acetyl-alpha-D-muramoyl-L-alanine + ADP + phosphate + H(+). It functions in the pathway cell wall biogenesis; peptidoglycan biosynthesis. Cell wall formation. The sequence is that of UDP-N-acetylmuramate--L-alanine ligase from Hydrogenovibrio crunogenus (strain DSM 25203 / XCL-2) (Thiomicrospira crunogena).